The sequence spans 383 residues: Protein ctg-1 (383 aa).

The CRAL-TRIO domain maps to 73–247; it reads PPECLEKYCG…YWGGNLVENG (175 aa). The 110-residue stretch at 271–380 folds into the GOLD domain; sequence KKAMADYDQL…AKQLRYNIEI (110 aa).

Highly expressed in cells of the pi uterine cell lineage.

It is found in the cytoplasm. The protein resides in the cytosol. Functionally, vesicle trafficking protein. Functions in uterine cells to promote basement membrane (BM) mobility and BM gap formation during tissue remodeling. The sequence is that of Protein ctg-1 from Caenorhabditis elegans.